The sequence spans 131 residues: Classical arabinogalactan protein 2 (131 aa).

An N-terminal signal peptide occupies residues 1–21 (MNSKAMQALIFLGFLATSCLA). A Pyrrolidone carboxylic acid modification is found at glutamine 22. Proline 24, proline 26, proline 28, proline 34, and proline 35 each carry 4-hydroxyproline. 5 O-linked (Ara...) hydroxyproline glycosylation sites follow: proline 24, proline 26, proline 28, proline 34, and proline 35. The segment at 24 to 106 (PAPAPTTVTP…PGPDGAADAP (83 aa)) is disordered. Pro residues-rich tracts occupy residues 25 to 38 (APAP…PTAL) and 49 to 64 (IASP…PAPT). Low complexity-rich tracts occupy residues 65 to 76 (TSPTTSPVASPP) and 90 to 106 (TPTS…ADAP). The GPI-anchor amidated serine moiety is linked to residue serine 107. The propeptide at 108–131 (AAWANKAFLVGTAVAGALYAVVLA) is removed in mature form.

The protein belongs to the classical AGP family. Post-translationally, O-glycosylated on hydroxyprolines; noncontiguous hydroxylproline residues are glycosylated with arabinogalactan.

The protein localises to the cell membrane. Proteoglycan that seems to be implicated in diverse developmental roles such as differentiation, cell-cell recognition, embryogenesis and programmed cell death. This is Classical arabinogalactan protein 2 (AGP2) from Arabidopsis thaliana (Mouse-ear cress).